The primary structure comprises 224 residues: Dehydration-responsive element-binding protein 1G (224 aa).

Residues 1–16 (MDVSAALSSDYSSGTP) are compositionally biased toward polar residues. Positions 1–46 (MDVSAALSSDYSSGTPSPVAADADDGSSAYMTVSSAPPKRRAGRTK) are disordered. Residues 54–111 (VFKGVRRRNPGRWVCEVREPHGKQRIWLGTFETAEMAARAHDVAALALRGRAACLNFA) constitute a DNA-binding region (AP2/ERF). Disordered stretches follow at residues 139–161 (AFRP…SGAT) and 200–224 (PPMA…LWSY).

The protein belongs to the AP2/ERF transcription factor family. ERF subfamily.

The protein localises to the nucleus. Functionally, transcriptional activator that binds specifically to the DNA sequence 5'-[AG]CCGAC-3'. Binding to the C-repeat/DRE element mediates high salinity- and dehydration-inducible transcription. The sequence is that of Dehydration-responsive element-binding protein 1G (DREB1G) from Oryza sativa subsp. japonica (Rice).